The sequence spans 334 residues: Fructose-1,6-bisphosphatase class 1 (334 aa).

4 residues coordinate Mg(2+): Glu-90, Asp-113, Leu-115, and Asp-116. Residues Asp-116 to Ser-119, Asn-209, Tyr-242, and Lys-272 contribute to the substrate site. Position 278 (Glu-278) interacts with Mg(2+).

This sequence belongs to the FBPase class 1 family. As to quaternary structure, homotetramer. It depends on Mg(2+) as a cofactor.

The protein localises to the cytoplasm. It carries out the reaction beta-D-fructose 1,6-bisphosphate + H2O = beta-D-fructose 6-phosphate + phosphate. Its pathway is carbohydrate biosynthesis; gluconeogenesis. This is Fructose-1,6-bisphosphatase class 1 from Actinobacillus succinogenes (strain ATCC 55618 / DSM 22257 / CCUG 43843 / 130Z).